The sequence spans 264 residues: Major prion protein (264 aa).

The signal sequence occupies residues 1-24 (MVKSHIGSWILVLFVAMWSDVGLC). The segment at 25-241 (KKRPKPGGGW…ESQAYYQRGA (217 aa)) is interaction with GRB2, ERI3 and SYN1. Residues 28 to 118 (PKPGGGWNTG…QWNKPSKPKT (91 aa)) form a disordered region. A run of 6 repeats spans residues 54–62 (PQGGGSWGQ), 63–70 (PHGGGWGQ), 71–78 (PHGGSWGQ), 79–86 (PHGGGWGQ), 87–94 (PHGGGWGQ), and 95–103 (PHGGGGWGQ). A 6 X 8 AA tandem repeats of P-H-G-G-G-W-G-Q region spans residues 54–103 (PQGGGSWGQPHGGGWGQPHGGSWGQPHGGGWGQPHGGGWGQPHGGGGWGQ). Residues 55–107 (QGGGSWGQPHGGGWGQPHGGSWGQPHGGGWGQPHGGGWGQPHGGGGWGQGGTH) are compositionally biased toward gly residues. Positions 72, 73, 74, 80, 81, 82, 88, 89, 90, 96, 98, and 99 each coordinate Cu(2+). Residues Cys190 and Cys225 are joined by a disulfide bond. N-linked (GlcNAc...) asparagine glycans are attached at residues Asn192 and Asn208. Ala241 carries the GPI-anchor amidated alanine lipid modification. The propeptide at 242-264 (SVVLFSSPPVVLLISFLIFLIVG) is removed in mature form.

It belongs to the prion family. As to quaternary structure, monomer and homodimer. Has a tendency to aggregate into amyloid fibrils containing a cross-beta spine, formed by a steric zipper of superposed beta-strands. Soluble oligomers may represent an intermediate stage on the path to fibril formation. Copper binding may promote oligomerization. Interacts with GRB2, APP, ERI3/PRNPIP and SYN1. Mislocalized cytosolically exposed PrP interacts with MGRN1; this interaction alters MGRN1 subcellular location and causes lysosomal enlargement. Interacts with KIAA1191.

Its subcellular location is the cell membrane. The protein localises to the golgi apparatus. Its function is as follows. Its primary physiological function is unclear. Has cytoprotective activity against internal or environmental stresses. May play a role in neuronal development and synaptic plasticity. May be required for neuronal myelin sheath maintenance. May play a role in iron uptake and iron homeostasis. Soluble oligomers are toxic to cultured neuroblastoma cells and induce apoptosis (in vitro). Association with GPC1 (via its heparan sulfate chains) targets PRNP to lipid rafts. Also provides Cu(2+) or Zn(2+) for the ascorbate-mediated GPC1 deaminase degradation of its heparan sulfate side chains. The protein is Major prion protein (PRNP) of Boselaphus tragocamelus (Nilgai).